The primary structure comprises 1207 residues: MKAHKTVFNQHPLSLNKLFFVLLLIFFLPPASPAASVNGLYKDSQQLLSFKAALPPTPTLLQNWLSSTDPCSFTGVSCKNSRVSSIDLSNTFLSVDFSLVTSYLLPLSNLESLVLKNANLSGSLTSAAKSQCGVTLDSIDLAENTISGPISDISSFGVCSNLKSLNLSKNFLDPPGKEMLKGATFSLQVLDLSYNNISGFNLFPWVSSMGFVELEFFSIKGNKLAGSIPELDFKNLSYLDLSANNFSTVFPSFKDCSNLQHLDLSSNKFYGDIGSSLSSCGKLSFLNLTNNQFVGLVPKLPSESLQYLYLRGNDFQGVYPNQLADLCKTVVELDLSYNNFSGMVPESLGECSSLELVDISNNNFSGKLPVDTLLKLSNIKTMVLSFNKFVGGLPDSFSNLPKLETLDMSSNNLTGIIPSGICKDPMNNLKVLYLQNNLFKGPIPDSLSNCSQLVSLDLSFNYLTGSIPSSLGSLSKLKDLILWLNQLSGEIPQELMYLQALENLILDFNDLTGPIPASLSNCTKLNWISLSNNQLSGEIPASLGRLSNLAILKLGNNSISGNIPAELGNCQSLIWLDLNTNFLNGSIPPPLFKQSGNIAVALLTGKRYVYIKNDGSKECHGAGNLLEFGGIRQEQLDRISTRHPCNFTRVYRGITQPTFNHNGSMIFLDLSYNKLEGSIPKELGAMYYLSILNLGHNDLSGMIPQQLGGLKNVAILDLSYNRFNGTIPNSLTSLTLLGEIDLSNNNLSGMIPESAPFDTFPDYRFANNSLCGYPLPLPCSSGPKSDANQHQKSHRRQASLAGSVAMGLLFSLFCIFGLIIVAIETKKRRRKKEAALEAYMDGHSHSATANSAWKFTSAREALSINLAAFEKPLRKLTFADLLEATNGFHNDSLVGSGGFGDVYKAQLKDGSVVAIKKLIHVSGQGDREFTAEMETIGKIKHRNLVPLLGYCKVGEERLLVYEYMKYGSLEDVLHDRKKTGIKLNWPARRKIAIGAARGLAFLHHNCIPHIIHRDMKSSNVLLDENLEARVSDFGMARLMSAMDTHLSVSTLAGTPGYVPPEYYQSFRCSTKGDVYSYGVVLLELLTGKQPTDSADFGDNNLVGWVKLHAKGKITDVFDRELLKEDASIEIELLQHLKVACACLDDRHWKRPTMIQVMAMFKEIQAGSGMDSTSTIGADDVNFSGVEGGIEMGINGSIKEGNELSKHL.

The first 34 residues, M1–A34, serve as a signal peptide directing secretion. Residues C71–C78 carry the Cys pair 1 motif. LRR repeat units follow at residues N109–Q131, T135–G157, N161–K181, S186–S207, E213–K234, N235–S257, N258–C280, K282–S304, L305–D325, T329–E350, S353–K375, N378–P401, K402–K423, N428–C450, Q452–L474, K476–Q499, A500–T523, K524–S547, N548–C570, and S572–Q594. Residue N119 is glycosylated (N-linked (GlcNAc...) asparagine). N-linked (GlcNAc...) asparagine glycans are attached at residues N166 and N196. 2 N-linked (GlcNAc...) asparagine glycosylation sites follow: N235 and N245. N287 carries an N-linked (GlcNAc...) asparagine glycan. Residues N339 and N363 are each glycosylated (N-linked (GlcNAc...) asparagine). 2 N-linked (GlcNAc...) asparagine glycosylation sites follow: N412 and N449. N-linked (GlcNAc...) asparagine glycosylation occurs at N521. N-linked (GlcNAc...) asparagine glycans are attached at residues N556, N584, N646, and N662. LRR repeat units lie at residues S664–M686, Y688–K711, N712–T735, and L736–D758. Residues N724, N746, and N767 are each glycosylated (N-linked (GlcNAc...) asparagine). Positions C771–C779 match the Cys pair 2 motif. Residues S803–I823 traverse the membrane as a helical segment. The region spanning F888 to I1163 is the Protein kinase domain. ATP contacts are provided by residues V894–V902 and K916. D1014 functions as the Proton acceptor in the catalytic mechanism.

This sequence belongs to the protein kinase superfamily. Ser/Thr protein kinase family. Glycosylated.

The protein resides in the cell membrane. The catalysed reaction is L-seryl-[protein] + ATP = O-phospho-L-seryl-[protein] + ADP + H(+). It catalyses the reaction L-threonyl-[protein] + ATP = O-phospho-L-threonyl-[protein] + ADP + H(+). Receptor with a serine/threonine-protein kinase activity. Involved in the perception of systemin, a peptide hormone responsible for the systemic activation of defense genes in leaves of wounded plants. May also regulate, in response to brassinosteroid binding, a signaling cascade involved in plant development. The polypeptide is Systemin receptor SR160 (Solanum peruvianum (Peruvian tomato)).